Reading from the N-terminus, the 282-residue chain is uncharacterized protein (282 aa).

Helical transmembrane passes span 9 to 29, 43 to 63, 123 to 143, 158 to 178, and 232 to 252; these read LLKI…APHG, ISGR…FLYA, VFVS…LYLV, YIGM…DNIL, and LAAG…ILLM.

It belongs to the steroid 5-alpha reductase family.

It is found in the endoplasmic reticulum membrane. This is an uncharacterized protein from Schizosaccharomyces pombe (strain 972 / ATCC 24843) (Fission yeast).